Reading from the N-terminus, the 638-residue chain is 1-deoxy-D-xylulose-5-phosphate synthase (638 aa).

Thiamine diphosphate-binding positions include H74 and 115–117 (GHS). D146 contacts Mg(2+). Thiamine diphosphate contacts are provided by residues 147–148 (GA), N175, Y286, and E366. Mg(2+) is bound at residue N175.

The protein belongs to the transketolase family. DXPS subfamily. Homodimer. Requires Mg(2+) as cofactor. Thiamine diphosphate is required as a cofactor.

The enzyme catalyses D-glyceraldehyde 3-phosphate + pyruvate + H(+) = 1-deoxy-D-xylulose 5-phosphate + CO2. It participates in metabolic intermediate biosynthesis; 1-deoxy-D-xylulose 5-phosphate biosynthesis; 1-deoxy-D-xylulose 5-phosphate from D-glyceraldehyde 3-phosphate and pyruvate: step 1/1. Its function is as follows. Catalyzes the acyloin condensation reaction between C atoms 2 and 3 of pyruvate and glyceraldehyde 3-phosphate to yield 1-deoxy-D-xylulose-5-phosphate (DXP). This Syntrophomonas wolfei subsp. wolfei (strain DSM 2245B / Goettingen) protein is 1-deoxy-D-xylulose-5-phosphate synthase.